The following is an 89-amino-acid chain: Small ribosomal subunit protein bS20 (89 aa).

A disordered region spans residues 1–26 (MANSAQARKRARQADGQRSHNASLRS).

It belongs to the bacterial ribosomal protein bS20 family.

In terms of biological role, binds directly to 16S ribosomal RNA. This Dechloromonas aromatica (strain RCB) protein is Small ribosomal subunit protein bS20.